Consider the following 178-residue polypeptide: Interleukin-10 (178 aa).

Positions 1–18 (MHSSALLCCLVLLTGVRA) are cleaved as a signal peptide. 2 disulfides stabilise this stretch: Cys-30–Cys-126 and Cys-80–Cys-132. The N-linked (GlcNAc...) asparagine glycan is linked to Asn-134.

This sequence belongs to the IL-10 family. As to quaternary structure, homodimer. Interacts with IL10RA and IL10RB.

It is found in the secreted. Major immune regulatory cytokine that acts on many cells of the immune system where it has profound anti-inflammatory functions, limiting excessive tissue disruption caused by inflammation. Mechanistically, IL10 binds to its heterotetrameric receptor comprising IL10RA and IL10RB leading to JAK1 and STAT2-mediated phosphorylation of STAT3. In turn, STAT3 translocates to the nucleus where it drives expression of anti-inflammatory mediators. Targets antigen-presenting cells (APCs) such as macrophages and monocytes and inhibits their release of pro-inflammatory cytokines including granulocyte-macrophage colony-stimulating factor /GM-CSF, granulocyte colony-stimulating factor/G-CSF, IL-1 alpha, IL-1 beta, IL-6, IL-8 and TNF-alpha. Also interferes with antigen presentation by reducing the expression of MHC-class II and co-stimulatory molecules, thereby inhibiting their ability to induce T cell activation. In addition, controls the inflammatory response of macrophages by reprogramming essential metabolic pathways including mTOR signaling. The chain is Interleukin-10 (IL10) from Cercocebus atys (Sooty mangabey).